The chain runs to 162 residues: NADH-quinone oxidoreductase subunit I (162 aa).

4Fe-4S ferredoxin-type domains are found at residues 54-83 (RRYENGEERCIACKLCEAVCPAMAITIESE) and 93-122 (TRYDIDLTKCIFCGFCEESCPVDSIVETQI). 8 residues coordinate [4Fe-4S] cluster: Cys-63, Cys-66, Cys-69, Cys-73, Cys-102, Cys-105, Cys-108, and Cys-112.

The protein belongs to the complex I 23 kDa subunit family. NDH-1 is composed of 14 different subunits. Subunits NuoA, H, J, K, L, M, N constitute the membrane sector of the complex. It depends on [4Fe-4S] cluster as a cofactor.

The protein resides in the cell inner membrane. It catalyses the reaction a quinone + NADH + 5 H(+)(in) = a quinol + NAD(+) + 4 H(+)(out). NDH-1 shuttles electrons from NADH, via FMN and iron-sulfur (Fe-S) centers, to quinones in the respiratory chain. The immediate electron acceptor for the enzyme in this species is believed to be ubiquinone. Couples the redox reaction to proton translocation (for every two electrons transferred, four hydrogen ions are translocated across the cytoplasmic membrane), and thus conserves the redox energy in a proton gradient. In Burkholderia vietnamiensis (strain G4 / LMG 22486) (Burkholderia cepacia (strain R1808)), this protein is NADH-quinone oxidoreductase subunit I.